A 479-amino-acid chain; its full sequence is Ribosomal RNA small subunit methyltransferase F (479 aa).

S-adenosyl-L-methionine contacts are provided by residues Ala125–Lys131, Glu149, Asp176, and Asp194. Cys247 (nucleophile) is an active-site residue.

It belongs to the class I-like SAM-binding methyltransferase superfamily. RsmB/NOP family.

It is found in the cytoplasm. It carries out the reaction cytidine(1407) in 16S rRNA + S-adenosyl-L-methionine = 5-methylcytidine(1407) in 16S rRNA + S-adenosyl-L-homocysteine + H(+). Its function is as follows. Specifically methylates the cytosine at position 1407 (m5C1407) of 16S rRNA. In Shigella boydii serotype 4 (strain Sb227), this protein is Ribosomal RNA small subunit methyltransferase F.